Consider the following 682-residue polypeptide: Activating transcription factor 7-interacting protein 2 (682 aa).

Residues 120–148 (SRTTESPSRVFTEEAKDSLNTSENDSEHQ) form a disordered region. Polar residues predominate over residues 137 to 148 (SLNTSENDSEHQ). Residues 328–378 (EIYSINYELFDKKLKELNQRIGKTECRNKHEGIADKLLAKIAKLQRRIKTV) adopt a coiled-coil conformation. At serine 416 the chain carries Phosphoserine. Polar residues-rich tracts occupy residues 418–451 (IEKSSVNYEPSNPSEKGSKKINLSSDQNKSVSES) and 462–490 (ESPNLTTPITSNPTDTRKITSGNSSNSPN). Disordered stretches follow at residues 418–491 (IEKS…SPNA) and 513–538 (NCNTESPVSPLESHSKAASNSKETTP). 2 positions are modified to phosphoserine: serine 488 and serine 521. Over residues 528-538 (KAASNSKETTP) the composition is skewed to polar residues. The Fibronectin type-III domain occupies 575–680 (PPQKPELKVK…IKSIPGFSEN (106 aa)).

The protein belongs to the MCAF family. In terms of assembly, interacts with MBD1, SETDB1 and SP1. Probably forms a complex with SETDB1 and MBD1.

The protein resides in the nucleus. Its function is as follows. Recruiter that couples transcriptional factors to general transcription apparatus and thereby modulates transcription regulation and chromatin formation. Can both act as an activator or a repressor depending on the context. Mediates MBD1-dependent transcriptional repression, probably by recruiting complexes containing SETDB1. The complex formed with MBD1 and SETDB1 represses transcription and probably couples DNA methylation and histone H3 'Lys-9' trimethylation (H3K9me3) activity. The sequence is that of Activating transcription factor 7-interacting protein 2 (ATF7IP2) from Homo sapiens (Human).